The sequence spans 282 residues: MKLAVYGKGGIGKSTTSCNISVALAKRGKKVLQIGCDPKHDSTFTLTGHLIPTIIDTLQEKDFHYEDIWPEDVIYKGYAGVDCVEAGGPPAGAGCGGYVVGETVKLLKELNAFDEYDIILFDVLGDVVCGGFASPLNYADYCLIVTDNGFDALFAANRIAASVREKARTHQLRLAGLIGNRTTKSDLIEKYTENVPIPILQLLPLIEDIRISRVKGKTLFEMSESNPELSPICDYYLNIADQILAKPEGIIPNEVLDRDLFTLLSDFYLNMDSSESSNLTLV.

ATP contacts are provided by residues 10–15 (GIGKST) and Lys39. Ser14 lines the Mg(2+) pocket. [4Fe-4S] cluster contacts are provided by Cys95 and Cys129. Position 180 to 181 (180 to 181 (NR)) interacts with ATP.

It belongs to the NifH/BchL/ChlL family. In terms of assembly, homodimer. Protochlorophyllide reductase is composed of three subunits; ChlL, ChlN and ChlB. [4Fe-4S] cluster is required as a cofactor.

It is found in the plastid. It localises to the cyanelle. It catalyses the reaction chlorophyllide a + oxidized 2[4Fe-4S]-[ferredoxin] + 2 ADP + 2 phosphate = protochlorophyllide a + reduced 2[4Fe-4S]-[ferredoxin] + 2 ATP + 2 H2O. The protein operates within porphyrin-containing compound metabolism; chlorophyll biosynthesis (light-independent). Its function is as follows. Component of the dark-operative protochlorophyllide reductase (DPOR) that uses Mg-ATP and reduced ferredoxin to reduce ring D of protochlorophyllide (Pchlide) to form chlorophyllide a (Chlide). This reaction is light-independent. The L component serves as a unique electron donor to the NB-component of the complex, and binds Mg-ATP. This chain is Light-independent protochlorophyllide reductase iron-sulfur ATP-binding protein, found in Cyanophora paradoxa.